Here is a 437-residue protein sequence, read N- to C-terminus: UDP-N-acetylmuramate--L-alanine ligase (437 aa).

108–114 serves as a coordination point for ATP; that stretch reads GAHGKTS.

It belongs to the MurCDEF family.

Its subcellular location is the cytoplasm. The catalysed reaction is UDP-N-acetyl-alpha-D-muramate + L-alanine + ATP = UDP-N-acetyl-alpha-D-muramoyl-L-alanine + ADP + phosphate + H(+). Its pathway is cell wall biogenesis; peptidoglycan biosynthesis. Its function is as follows. Cell wall formation. This chain is UDP-N-acetylmuramate--L-alanine ligase, found in Staphylococcus epidermidis (strain ATCC 12228 / FDA PCI 1200).